The primary structure comprises 833 residues: Leucine--tRNA ligase (833 aa).

The short motif at 41 to 52 (PYPSGAGLHVGH) is the 'HIGH' region element. The short motif at 610-614 (KMSKS) is the 'KMSKS' region element. An ATP-binding site is contributed by lysine 613.

This sequence belongs to the class-I aminoacyl-tRNA synthetase family.

It localises to the cytoplasm. It carries out the reaction tRNA(Leu) + L-leucine + ATP = L-leucyl-tRNA(Leu) + AMP + diphosphate. The protein is Leucine--tRNA ligase of Streptococcus pneumoniae (strain Hungary19A-6).